The sequence spans 74 residues: Large ribosomal subunit protein bL31 (74 aa).

The Zn(2+) site is built by Cys-16, Cys-18, Cys-38, and Cys-41.

The protein belongs to the bacterial ribosomal protein bL31 family. Type A subfamily. Part of the 50S ribosomal subunit. Zn(2+) is required as a cofactor.

In terms of biological role, binds the 23S rRNA. This Streptomyces griseus subsp. griseus (strain JCM 4626 / CBS 651.72 / NBRC 13350 / KCC S-0626 / ISP 5235) protein is Large ribosomal subunit protein bL31.